The chain runs to 992 residues: Ribosome quality control complex subunit NEMF homolog (992 aa).

The segment covering 214 to 231 (KETTEETPEAEDKPEKGG) has biased composition (basic and acidic residues). Residues 214–245 (KETTEETPEAEDKPEKGGKKQRKKQQNTKLEQ) are disordered. Coiled-coil stretches lie at residues 331–370 (STQE…LTKV) and 481–514 (SAAQ…VRTI). Disordered stretches follow at residues 688 to 715 (EVEH…NTEI) and 771 to 895 (GPSR…GDVD). Polar residues predominate over residues 702–715 (SNINLSEPSSNTEI). The stretch at 774–839 (RKKQVSAKKT…QDDEEREIRM (66 aa)) forms a coiled coil. Residues 782 to 796 (KTKEDKARAKQEAAK) show a composition bias toward basic and acidic residues. A compositionally biased stretch (basic residues) spans 814–825 (RGQKGKLKKMKQ). The span at 845–874 (SGKEKPQASADKVVEKSESTKEYVKPEKSA) shows a compositional bias: basic and acidic residues.

Belongs to the NEMF family. As to quaternary structure, component of the ribosome quality control complex (RQC), composed of at least the E3 ubiquitin ligase l(3)76BDr/LTN1 and Clbn/NEMF associated with the 60S ribosomal subunit. The complex probably also contains TCF25 as well as TER94/VCP and its ubiquitin-binding cofactors. Interacts (via its C-terminus) with pros (via its homeobox). Interacts (via its N-terminus) with emb. Expressed in enterocytes (at protein level).

The protein localises to the nucleus. Its subcellular location is the cytoplasm. It is found in the mitochondrion outer membrane. In terms of biological role, key component of the ribosome quality control complex (RQC), a ribosome-associated complex that mediates the extraction of incompletely synthesized nascent chains from stalled ribosomes as well as their ubiquitin-mediated proteasomal degradation. Thereby, frees 60S subunit ribosomes from the stalled translation complex and prevents the accumulation of nascent polypeptide chains that are potentially toxic for the cell. Within the RQC complex, Clbn/NEMF specifically binds stalled 60S ribosomal subunits by recognizing an exposed, nascent chain-conjugated tRNA moiety. Following binding to stalled 60S ribosomal subunits, Clbn/NEMF mediates CAT tailing by recruiting alanine-charged tRNA to the A-site and directing the elongation of stalled nascent chains independently of mRNA or 40S subunits, leading to non-templated C-terminal alanine extensions (CAT tails). On mitochondrial surface, plays a role in mitochondrial-stress induced translational termination impairment and protein carboxyl terminal extension (MISTERMINATE). Plays a role in regulating nuclear transport possibly through directly binding to both emb and cargo proteins. Plays a role in the regulation of G1-to-S cell cycle transition. Regulates S phase checkpoint by antagonizing E2F1 activity. Together with hid and tefu/ATM, plays a role in DNA damage-induced apoptosis through both p53-dependent and -independent activity. Plays an essential role in the regulation of mitochondrial structure and redox state in enterocytes which is essential for the control of intestinal stem cells proliferation and intestinal homeostasis. The chain is Ribosome quality control complex subunit NEMF homolog from Drosophila melanogaster (Fruit fly).